The sequence spans 359 residues: Protein disulfide-isomerase tigA (359 aa).

A signal peptide spans 1-19; sequence MVRLSNLVSCLGLASAVTA. Thioredoxin domains lie at 20-129 and 131-250; these read AVVD…EKTG and KPRG…EKTG. Active-site nucleophile residues include Cys49, Cys52, Cys169, and Cys172. 2 cysteine pairs are disulfide-bonded: Cys49-Cys52 and Cys169-Cys172. A Prevents secretion from ER motif is present at residues 356 to 359; the sequence is KDEL.

It belongs to the protein disulfide isomerase family.

The protein localises to the endoplasmic reticulum lumen. It catalyses the reaction Catalyzes the rearrangement of -S-S- bonds in proteins.. In Aspergillus niger, this protein is Protein disulfide-isomerase tigA (tigA).